Consider the following 144-residue polypeptide: Granulocyte-macrophage colony-stimulating factor (144 aa).

The first 17 residues, M1–S17, serve as a signal peptide directing secretion. An O-linked (GalNAc...) serine glycan is attached at S22. O-linked (GalNAc...) threonine glycosylation occurs at T27. N-linked (GlcNAc...) asparagine glycosylation occurs at N44. 2 cysteine pairs are disulfide-bonded: C71/C113 and C105/C138.

Belongs to the GM-CSF family. In terms of assembly, monomer. The signaling GM-CSF receptor complex is a dodecamer of two head-to-head hexamers of two alpha, two beta, and two ligand subunits.

It is found in the secreted. Functionally, cytokine that stimulates the growth and differentiation of hematopoietic precursor cells from various lineages, including granulocytes, macrophages, eosinophils and erythrocytes. The protein is Granulocyte-macrophage colony-stimulating factor (CSF2) of Canis lupus familiaris (Dog).